The chain runs to 166 residues: Ribonuclease H2 subunit C (166 aa).

Met1 is modified (N-acetylmethionine).

It belongs to the RNase H2 subunit C family. As to quaternary structure, the RNase H2 complex is a heterotrimer composed of the catalytic subunit RNASEH2A and the non-catalytic subunits RNASEH2B and RNASEH2C.

The protein localises to the nucleus. Functionally, non catalytic subunit of RNase H2, an endonuclease that specifically degrades the RNA of RNA:DNA hybrids. Participates in DNA replication, possibly by mediating the removal of lagging-strand Okazaki fragment RNA primers during DNA replication. Mediates the excision of single ribonucleotides from DNA:RNA duplexes. In Mus musculus (Mouse), this protein is Ribonuclease H2 subunit C (Rnaseh2c).